A 72-amino-acid chain; its full sequence is Penaeidin-2b (72 aa).

The N-terminal stretch at 1-21 (MRLVVCLVFLASFALVCQGEA) is a signal peptide. Intrachain disulfides connect cysteine 45/cysteine 59, cysteine 48/cysteine 66, and cysteine 60/cysteine 67. Lysine 71 bears the Lysine amide mark.

The protein belongs to the penaeidin family.

The protein localises to the cytoplasmic granule. Its function is as follows. Antibacterial and antifungal activity. Presents chitin-binding activity. In Penaeus vannamei (Whiteleg shrimp), this protein is Penaeidin-2b.